Here is a 2233-residue protein sequence, read N- to C-terminus: Acetyl-CoA carboxylase (2233 aa).

The residue at position 2 (Ser2) is an N-acetylserine. Ser2 bears the Phosphoserine mark. The region spanning 58 to 567 (VISKILIANN…TTGWLDDLIT (510 aa)) is the Biotin carboxylation domain. Positions 216–408 (KTGLVSVDDD…LPAAQLQIAM (193 aa)) constitute an ATP-grasp domain. Position 256–261 (256–261 (GGGGKG)) interacts with ATP. Mn(2+)-binding residues include Glu365, Glu379, and Asn381. The active site involves Arg383. Residues 694–768 (LEVENDPTQL…VAGDIMAIMT (75 aa)) form the Biotinyl-binding domain. Lys735 carries the N6-biotinyllysine modification. Ser790, Ser1148, Ser1157, and Ser1162 each carry phosphoserine. A CoA carboxyltransferase N-terminal domain is found at 1486–1822 (PYPVKEWLQP…KRNMPVPILE (337 aa)). The carboxyltransferase stretch occupies residues 1486–2141 (PYPVKEWLQP…EEYLIKRLSH (656 aa)). 1627 to 1629 (ARI) serves as a coordination point for acetyl-CoA. CoA is bound at residue Arg1731. The 316-residue stretch at 1826–2141 (TWDRPVDFTP…EEYLIKRLSH (316 aa)) folds into the CoA carboxyltransferase C-terminal domain. Gly1998 contacts acetyl-CoA. Residues Lys2034 and Arg2036 each contribute to the CoA site.

In terms of assembly, homodimer. Biotin is required as a cofactor. Requires Mn(2+) as cofactor.

It is found in the cytoplasm. The protein localises to the endoplasmic reticulum membrane. It carries out the reaction hydrogencarbonate + acetyl-CoA + ATP = malonyl-CoA + ADP + phosphate + H(+). The catalysed reaction is N(6)-biotinyl-L-lysyl-[protein] + hydrogencarbonate + ATP = N(6)-carboxybiotinyl-L-lysyl-[protein] + ADP + phosphate + H(+). It functions in the pathway lipid metabolism; malonyl-CoA biosynthesis; malonyl-CoA from acetyl-CoA: step 1/1. By phosphorylation. The catalytic activity is inhibited by soraphen A, a polyketide isolated from the myxobacterium Sorangium cellulosum and a potent inhibitor of fungal growth. Its function is as follows. Carries out three functions: biotin carboxyl carrier protein, biotin carboxylase and carboxyltransferase. Involved in the synthesis of very-long-chain fatty acid synthesis which is required to maintain a functional nuclear envelope. Required for acylation and vacuolar membrane association of VAC8 which is necessary to maintain a normal morphology of the vacuole. This Saccharomyces cerevisiae (strain ATCC 204508 / S288c) (Baker's yeast) protein is Acetyl-CoA carboxylase (ACC1).